The chain runs to 585 residues: Pre-mRNA-splicing factor sap145 (585 aa).

The stretch at 1 to 74 forms a coiled coil; it reads MAEIQTAQNP…NNDNLYNDKK (74 aa). The disordered stretch occupies residues 1 to 84; the sequence is MAEIQTAQNP…SNGNFYDTNK (84 aa). The span at 12-22 shows a compositional bias: basic and acidic residues; the sequence is KELEKILERNN. Over residues 23–41 the composition is skewed to basic residues; sequence KQKNKKSRNQVRREKKKLL. The span at 51–62 shows a compositional bias: basic and acidic residues; the sequence is LAEKNSDDKDQL. Position 145 is a phosphoserine (Ser145). The interval 400-460 is disordered; sequence IHAGTGSPVS…SASEPRSQRE (61 aa). Positions 416–439 are enriched in acidic residues; sequence LEEFEEEESSEEEESEDVEYPTEE.

As to quaternary structure, belongs to the 40S cdc5-associated complex (or cwf complex), a spliceosome sub-complex reminiscent of a late-stage spliceosome composed of the U2, U5 and U6 snRNAs and at least brr2, cdc5, cwf2/prp3, cwf3/syf1, cwf4/syf3, cwf5/ecm2, spp42/cwf6, cwf7/spf27, cwf8, cwf9, cwf10, cwf11, cwf12, prp45/cwf13, cwf14, cwf15, cwf16, cwf17, cwf18, cwf19, cwf20, cwf21, cwf22, cwf23, cwf24, cwf25, cwf26, cyp7/cwf27, cwf28, cwf29/ist3, lea1, msl1, prp5/cwf1, prp10/sap155, prp12/sap130, prp17, prp22, sap61, sap62, sap114, sap145, slu7, smb1, smd1, smd3, smf1, smg1 and syf2. Sap145 is part of the SF3b subcomplex of the Prp19-associated nineteen complex (NTC), composed of ini1, prp10, prp12/sap130, sap10/sap155, sap14, sap49 and sap145. Part of the U2 snRNP.

The protein localises to the nucleus. It localises to the cytoplasm. Involved in pre-mRNA splicing. May be involved in endoplasmic reticulum-associated protein degradation (ERAD) and required for growth at low and high temperatures. In Schizosaccharomyces pombe (strain 972 / ATCC 24843) (Fission yeast), this protein is Pre-mRNA-splicing factor sap145 (sap145).